The primary structure comprises 500 residues: Probable zinc metalloprotease MGYG_02393 (500 aa).

Positions 1–24 (MHLSMGGLLPGLALLASANALALA) are cleaved as a signal peptide. N-linked (GlcNAc...) asparagine glycans are attached at residues Asn61, Asn103, and Asn124. Zn(2+)-binding residues include His174, Asp194, and Glu230. An N-linked (GlcNAc...) asparagine glycan is attached at Asn245. Asp257 is a Zn(2+) binding site. The Fibronectin type-III domain occupies 414-500 (MPRNVRVNTS…ERGVAVLPFP (87 aa)). 2 N-linked (GlcNAc...) asparagine glycosylation sites follow: Asn421 and Asn427.

Belongs to the peptidase M28 family. M28B subfamily. It depends on Zn(2+) as a cofactor.

It localises to the secreted. This chain is Probable zinc metalloprotease MGYG_02393, found in Arthroderma gypseum (strain ATCC MYA-4604 / CBS 118893) (Microsporum gypseum).